We begin with the raw amino-acid sequence, 78 residues long: U7-lycotoxin-Ls1h (78 aa).

An N-terminal signal peptide occupies residues 1–22; it reads MKLIIFTGLTLLLIVSLIDVEA. Residues 23–26 constitute a propeptide that is removed on maturation; it reads QNEG.

Belongs to the neurotoxin 19 (CSTX) family. 07 (U7-Lctx) subfamily. In terms of processing, contains 4 disulfide bonds. As to expression, expressed by the venom gland.

Its subcellular location is the secreted. The polypeptide is U7-lycotoxin-Ls1h (Lycosa singoriensis (Wolf spider)).